Here is a 423-residue protein sequence, read N- to C-terminus: Glycine amidinotransferase, mitochondrial (423 aa).

The transit peptide at Met-1–Thr-43 directs the protein to the mitochondrion. Ser-46 and Ser-49 each carry phosphoserine. Asp-170 contributes to the arginine binding site. Catalysis depends on residues Asp-254 and His-303. Positions 305, 322, 354, and 355 each coordinate arginine. Lys-385 is modified (N6-acetyllysine). The Amidino-cysteine intermediate role is filled by Cys-407.

This sequence belongs to the amidinotransferase family. Homodimer.

It localises to the mitochondrion inner membrane. It catalyses the reaction L-arginine + glycine = guanidinoacetate + L-ornithine. The enzyme catalyses 4-aminobutanoate + L-arginine = 4-guanidinobutanoate + L-ornithine. It carries out the reaction beta-alanine + L-arginine = 3-guanidinopropanoate + L-ornithine. The catalysed reaction is taurine + L-arginine = taurocyamine + L-ornithine. The protein operates within amine and polyamine biosynthesis; creatine biosynthesis; creatine from L-arginine and glycine: step 1/2. Transamidinase that catalyzes the transfer of the amidino group of L-arginine onto the amino moiety of acceptor metabolites such as glycine, beta-alanine, gamma-aminobutyric acid (GABA) and taurine yielding the corresponding guanidine derivatives. Catalyzes the rate-limiting step of creatine biosynthesis, namely the transfer of the amidino group from L-arginine to glycine to generate guanidinoacetate, which is then methylated by GAMT to form creatine. Provides creatine as a source for ATP generation in tissues with high energy demands, in particular skeletal muscle, heart and brain. The polypeptide is Glycine amidinotransferase, mitochondrial (GATM) (Bos taurus (Bovine)).